The chain runs to 311 residues: Aspartate carbamoyltransferase catalytic subunit (311 aa).

Residues R55 and T56 each coordinate carbamoyl phosphate. K85 contributes to the L-aspartate binding site. Carbamoyl phosphate contacts are provided by R106, H134, and Q137. R167 and R228 together coordinate L-aspartate. Residues L266 and P267 each coordinate carbamoyl phosphate.

It belongs to the aspartate/ornithine carbamoyltransferase superfamily. ATCase family. Heterododecamer (2C3:3R2) of six catalytic PyrB chains organized as two trimers (C3), and six regulatory PyrI chains organized as three dimers (R2).

The enzyme catalyses carbamoyl phosphate + L-aspartate = N-carbamoyl-L-aspartate + phosphate + H(+). Its pathway is pyrimidine metabolism; UMP biosynthesis via de novo pathway; (S)-dihydroorotate from bicarbonate: step 2/3. Functionally, catalyzes the condensation of carbamoyl phosphate and aspartate to form carbamoyl aspartate and inorganic phosphate, the committed step in the de novo pyrimidine nucleotide biosynthesis pathway. The chain is Aspartate carbamoyltransferase catalytic subunit from Psychromonas ingrahamii (strain DSM 17664 / CCUG 51855 / 37).